The primary structure comprises 156 residues: Small ribosomal subunit protein uS7 (156 aa).

This sequence belongs to the universal ribosomal protein uS7 family. In terms of assembly, part of the 30S ribosomal subunit. Contacts proteins S9 and S11.

One of the primary rRNA binding proteins, it binds directly to 16S rRNA where it nucleates assembly of the head domain of the 30S subunit. Is located at the subunit interface close to the decoding center, probably blocks exit of the E-site tRNA. This chain is Small ribosomal subunit protein uS7, found in Symbiobacterium thermophilum (strain DSM 24528 / JCM 14929 / IAM 14863 / T).